A 429-amino-acid chain; its full sequence is MSFLSIVRDVRDTVGSFSRRSFDVRVSNGTTHQRSKSHGVEAHIEDLIVIKNTRWANLPAALLRDVMKKLDESESTWPARKQVVACAGVCKTWRLMCKDIVKSPEFSGKLTFPVSLKQPGPRDGIIQCYIKRDKSNMTYHLYLSLSPAILVESGKFLLSAKRSRRATYTEYVISMDADNISRSSSTYIGKLKSNFLGTKFIVYDTAPAYNSSQILSPPNRSRSFNSKKVSPKVPSGSYNIAQVTYELNLLGTRGPRRMNCIMHSIPSLALEPGGTVPSQPEFLQRSLDESFRSIGSSKIVNHSGDFTRPKEEEGKVRPLVLKTKPPRWLQPLRCWCLNFKGRVTVASVKNFQLMSAATVQPGSGSDGGALATRPSLSPQQPEQSNHDKIILHFGKVGKDMFTMDYRYPLSAFQAFAISLSTFDTKLACE.

The F-box domain maps to Thr-53–Gly-108. Residues Gln-360–Asn-385 form a disordered region. The span at Pro-374 to Gln-383 shows a compositional bias: polar residues.

This sequence belongs to the TUB family. As to expression, mostly expressed in roots, flowers and siliques.

This is Tubby-like F-box protein 5 from Arabidopsis thaliana (Mouse-ear cress).